Consider the following 243-residue polypeptide: Small ribosomal subunit protein uS3 (243 aa).

The KH type-2 domain occupies 39–110 (IRVFIQKKYG…QVRINVVEIE (72 aa)). The interval 216–243 (QPLPVGASPRRKGNRRPQQFEDRSNDGK) is disordered. A compositionally biased stretch (basic and acidic residues) spans 233–243 (QQFEDRSNDGK).

Belongs to the universal ribosomal protein uS3 family. As to quaternary structure, part of the 30S ribosomal subunit. Forms a tight complex with proteins S10 and S14.

Its function is as follows. Binds the lower part of the 30S subunit head. Binds mRNA in the 70S ribosome, positioning it for translation. The chain is Small ribosomal subunit protein uS3 from Prochlorococcus marinus (strain SARG / CCMP1375 / SS120).